We begin with the raw amino-acid sequence, 540 residues long: Putative laccase-11 (540 aa).

Plastocyanin-like domains are found at residues 1–114 (MATV…PPRG), 124–279 (REVP…YYGA), and 389–523 (NFPA…NDGP). 4 residues coordinate Cu cation: H48, H50, H93, and H95. Positions 440, 443, 445, 502, 503, 504, and 508 each coordinate Cu cation.

The protein belongs to the multicopper oxidase family. It depends on Cu cation as a cofactor.

The protein resides in the secreted. It localises to the extracellular space. Its subcellular location is the apoplast. The catalysed reaction is 4 hydroquinone + O2 = 4 benzosemiquinone + 2 H2O. Its function is as follows. Lignin degradation and detoxification of lignin-derived products. This Oryza sativa subsp. japonica (Rice) protein is Putative laccase-11 (LAC11).